The chain runs to 957 residues: Glycine dehydrogenase (decarboxylating) (957 aa).

K708 bears the N6-(pyridoxal phosphate)lysine mark.

Belongs to the GcvP family. The glycine cleavage system is composed of four proteins: P, T, L and H. Pyridoxal 5'-phosphate serves as cofactor.

It carries out the reaction N(6)-[(R)-lipoyl]-L-lysyl-[glycine-cleavage complex H protein] + glycine + H(+) = N(6)-[(R)-S(8)-aminomethyldihydrolipoyl]-L-lysyl-[glycine-cleavage complex H protein] + CO2. Its function is as follows. The glycine cleavage system catalyzes the degradation of glycine. The P protein binds the alpha-amino group of glycine through its pyridoxal phosphate cofactor; CO(2) is released and the remaining methylamine moiety is then transferred to the lipoamide cofactor of the H protein. The polypeptide is Glycine dehydrogenase (decarboxylating) (Pectobacterium atrosepticum (strain SCRI 1043 / ATCC BAA-672) (Erwinia carotovora subsp. atroseptica)).